Here is a 204-residue protein sequence, read N- to C-terminus: ADP-ribosylation factor-like protein 15 (204 aa).

Residues 39-46 (GLTGSGKT), 82-86 (ELGGA), and 142-145 (NHQD) contribute to the GTP site.

Belongs to the small GTPase superfamily. Arf family.

This Homo sapiens (Human) protein is ADP-ribosylation factor-like protein 15 (ARL15).